The sequence spans 268 residues: Putative esterase/lipase 2 (268 aa).

The active site involves histidine 29. Serine 98 functions as the Charge relay system in the catalytic mechanism.

This sequence belongs to the lipase/esterase LIP3/BchO family.

This Mycoplasma genitalium (strain ATCC 33530 / DSM 19775 / NCTC 10195 / G37) (Mycoplasmoides genitalium) protein is Putative esterase/lipase 2.